Reading from the N-terminus, the 619-residue chain is MARIIGIDLGTSNTAAAAMEGGRATIIPSAEGSSIGGKAFPSYVAFTKDGQRLVGEPARRQAIANPEGTVTAFKRRMGEDYKFTLRGQEFTPQQLSAFVLQKVKKDAEAFLGEPVEKAVITVPAYFNDNQRQATKDAGRIAGLEVVRLVNEPTAAALAYGIDKAGKEQKIMVFDLGGGTLDVTIMEMGKEGTFDVLSTSGDTKLGGTDMDNAIIEWMVSEFKKSTGIDLSADKQAAQRLKDAAEKAKIELSTTMETDINLPFISAGADGPKHLELKLSRAKLESLVDSIVKRCGASIDQALNDSSLKSTEIDKIILVGGPTRMPIVQKYVEDHAGKKIERGIDPMECVATGAAVQAGILTGDVKDVLLLDVTPLSLGLETLGGVTTRLIERNTTIPVRKTQVFSTASDNQPAVTINVLQGERPMAKDNVPLGKFDLDGIPPAPRGVPQIEVTFDIDANGILNVSAKDLGTNKQQHITITSKTKLSDDEVQKFVKEAEKFADEDKKTKERVDAKNEADSVLFQTEKALKEHGDKVPQEDRLNIDRALGDLKEALKGDDVERIKKAKDDALAASQKLGEIIYKESQAKAQGAAGPQPGAQAQGQPNDGGKEDVVEAEVVDK.

A Phosphothreonine; by autocatalysis modification is found at T179. Residues 584–619 (QAKAQGAAGPQPGAQAQGQPNDGGKEDVVEAEVVDK) form a disordered region. Residues 585–605 (AKAQGAAGPQPGAQAQGQPND) are compositionally biased toward low complexity. Residues 606 to 619 (GGKEDVVEAEVVDK) are compositionally biased toward basic and acidic residues.

It belongs to the heat shock protein 70 family.

Functionally, acts as a chaperone. The polypeptide is Chaperone protein DnaK (Elusimicrobium minutum (strain Pei191)).